The sequence spans 121 residues: Ribosome-binding factor A (121 aa).

The protein belongs to the RbfA family. Monomer. Binds 30S ribosomal subunits, but not 50S ribosomal subunits or 70S ribosomes.

It is found in the cytoplasm. One of several proteins that assist in the late maturation steps of the functional core of the 30S ribosomal subunit. Associates with free 30S ribosomal subunits (but not with 30S subunits that are part of 70S ribosomes or polysomes). Required for efficient processing of 16S rRNA. May interact with the 5'-terminal helix region of 16S rRNA. This chain is Ribosome-binding factor A, found in Clostridium kluyveri (strain NBRC 12016).